The following is a 349-amino-acid chain: Probable esterase Cgl0839 (349 aa).

In terms of domain architecture, AB hydrolase-1 spans 60–329; sequence GTHQTWFQQY…EDIAGHLGLF (270 aa). The active-site Nucleophile is the Ser142. Residues Asp296 and His325 contribute to the active site.

It belongs to the AB hydrolase superfamily. Acetyl esterase family. Homodimer.

In terms of biological role, esterase that catalyzes the hydrolysis of 4-nitrophenyl acetate in vitro. The chain is Probable esterase Cgl0839 from Corynebacterium glutamicum (strain ATCC 13032 / DSM 20300 / JCM 1318 / BCRC 11384 / CCUG 27702 / LMG 3730 / NBRC 12168 / NCIMB 10025 / NRRL B-2784 / 534).